We begin with the raw amino-acid sequence, 386 residues long: Putative F-box/kelch-repeat protein At4g11750 (386 aa).

In terms of domain architecture, F-box spans 5–51; that stretch reads PVDLPYIPDDLLLNCLARVSRLYYPILSLVSKRFRSLVASLELYEIR. Kelch repeat units follow at residues 187 to 236, 238 to 285, and 287 to 324; these read KIYV…VYDG, LYLF…YGRS, and VLMW…GYSG.

This is Putative F-box/kelch-repeat protein At4g11750 from Arabidopsis thaliana (Mouse-ear cress).